The primary structure comprises 351 residues: Transcriptional activator POG1 (351 aa).

The segment covering 1 to 27 (MKQEPHRQSEEKEKPKGPMAVEREHHT) has biased composition (basic and acidic residues). A disordered region spans residues 1–56 (MKQEPHRQSEEKEKPKGPMAVEREHHTSLSSGTTMTASTGDESTNSRPVESSQTEK). Polar residues predominate over residues 28–56 (SLSSGTTMTASTGDESTNSRPVESSQTEK). Ser-152 and Ser-168 each carry phosphoserine. 2 disordered regions span residues 237 to 256 (GPQA…TPVM) and 280 to 351 (SMGP…PPPT). Composition is skewed to polar residues over residues 241–256 (QLPT…TPVM) and 287–296 (IYGQQHQPQP). Residue Ser-314 is modified to Phosphoserine.

The protein belongs to the POG1 family. In terms of processing, phosphorylated by CDC28.

The protein localises to the nucleus. Its function is as follows. Transcriptional activator which promotes cell cycle recovery with CLN2, after pheromone induced G1 arrest, probably inhibiting the ability of STE20 to activate the pheromone response pathway. Binds the promoters of genes that function in cell cycle regulation, cytoskeletal organization, and spindle assembly. May also be involved in stress-resistance. This chain is Transcriptional activator POG1 (POG1), found in Saccharomyces cerevisiae (strain YJM789) (Baker's yeast).